We begin with the raw amino-acid sequence, 380 residues long: 3-dehydroquinate synthase (380 aa).

This sequence belongs to the archaeal-type DHQ synthase family.

The enzyme catalyses 2-amino-2,3,7-trideoxy-D-lyxo-hept-6-ulosonate + NAD(+) + H2O = 3-dehydroquinate + NH4(+) + NADH + H(+). Catalyzes the oxidative deamination and cyclization of 2-amino-3,7-dideoxy-D-threo-hept-6-ulosonic acid (ADH) to yield 3-dehydroquinate (DHQ), which is fed into the canonical shikimic pathway of aromatic amino acid biosynthesis. In Methanosarcina acetivorans (strain ATCC 35395 / DSM 2834 / JCM 12185 / C2A), this protein is 3-dehydroquinate synthase.